A 93-amino-acid chain; its full sequence is MKLAITIILVMLSVCYSSDTCPGFLQVLEYLFMGSESTYEAALKFYNPGSDLQNSGMQLKKLVDTLPEKTRVNIVKLSEIILTSNLCNQDPSF.

A signal peptide spans 1-17 (MKLAITIILVMLSVCYS).

Belongs to the secretoglobin family. Antiparallel homodimer; disulfide-linked. Interaction with LMBR1L is controversial.

Its subcellular location is the secreted. Its function is as follows. Binds phosphatidylcholine, phosphatidylinositol, polychlorinated biphenyls (PCB) and weakly progesterone, potent inhibitor of phospholipase A2. The chain is Uteroglobin (SCGB1A1) from Neotomodon alstoni (Mexican volcano mouse).